Reading from the N-terminus, the 637-residue chain is Threonine--tRNA ligase (637 aa).

A TGS domain is found at 1-61 (MLNITLPDGS…TEDSSVQIIT (61 aa)). The interval 242–533 (DHRKLGKQLD…LIENHAGSFP (292 aa)) is catalytic. Residues cysteine 333, histidine 384, and histidine 510 each contribute to the Zn(2+) site.

The protein belongs to the class-II aminoacyl-tRNA synthetase family. In terms of assembly, homodimer. Requires Zn(2+) as cofactor.

Its subcellular location is the cytoplasm. It catalyses the reaction tRNA(Thr) + L-threonine + ATP = L-threonyl-tRNA(Thr) + AMP + diphosphate + H(+). Its function is as follows. Catalyzes the attachment of threonine to tRNA(Thr) in a two-step reaction: L-threonine is first activated by ATP to form Thr-AMP and then transferred to the acceptor end of tRNA(Thr). Also edits incorrectly charged L-seryl-tRNA(Thr). The polypeptide is Threonine--tRNA ligase (Neisseria meningitidis serogroup C (strain 053442)).